The sequence spans 500 residues: Glycerol kinase (500 aa).

Threonine 14 provides a ligand contact to ADP. Residues threonine 14, threonine 15, and serine 16 each coordinate ATP. Threonine 14 is a sn-glycerol 3-phosphate binding site. Residue arginine 18 coordinates ADP. Sn-glycerol 3-phosphate contacts are provided by arginine 84, glutamate 85, and tyrosine 136. Residues arginine 84, glutamate 85, and tyrosine 136 each coordinate glycerol. A Phosphohistidine; by HPr modification is found at histidine 232. Residue aspartate 246 participates in sn-glycerol 3-phosphate binding. 2 residues coordinate glycerol: aspartate 246 and glutamine 247. ADP is bound by residues threonine 268 and glycine 311. The ATP site is built by threonine 268, glycine 311, glutamine 315, and glycine 412. ADP-binding residues include glycine 412 and asparagine 416.

Belongs to the FGGY kinase family. Homotetramer and homodimer (in equilibrium). In terms of processing, the phosphoenolpyruvate-dependent sugar phosphotransferase system (PTS), including enzyme I, and histidine-containing protein (HPr) are required for the phosphorylation, which leads to the activation of the enzyme.

The catalysed reaction is glycerol + ATP = sn-glycerol 3-phosphate + ADP + H(+). It participates in polyol metabolism; glycerol degradation via glycerol kinase pathway; sn-glycerol 3-phosphate from glycerol: step 1/1. With respect to regulation, activated by phosphorylation and inhibited by fructose 1,6-bisphosphate (FBP). Key enzyme in the regulation of glycerol uptake and metabolism. Catalyzes the phosphorylation of glycerol to yield sn-glycerol 3-phosphate. This chain is Glycerol kinase, found in Limosilactobacillus reuteri (strain DSM 20016) (Lactobacillus reuteri).